The following is an 89-amino-acid chain: Small ribosomal subunit protein uS14 (89 aa).

This sequence belongs to the universal ribosomal protein uS14 family. Part of the 30S ribosomal subunit. Contacts proteins S3 and S10.

Binds 16S rRNA, required for the assembly of 30S particles and may also be responsible for determining the conformation of the 16S rRNA at the A site. In Pelodictyon phaeoclathratiforme (strain DSM 5477 / BU-1), this protein is Small ribosomal subunit protein uS14.